A 376-amino-acid chain; its full sequence is Putative 12-oxophytodienoate reductase 2 (376 aa).

Residues 31–33 (PLT), alanine 64, and glutamine 106 contribute to the FMN site. 178–181 (HGAH) contacts substrate. Tyrosine 183 acts as the Proton donor in catalysis. FMN is bound by residues arginine 230, glycine 301, and 322 to 323 (GR).

The protein belongs to the NADH:flavin oxidoreductase/NADH oxidase family. Requires FMN as cofactor.

Functionally, putative oxophytodienoate reductase that may be involved in the biosynthesis or metabolism of oxylipin signaling molecules. The polypeptide is Putative 12-oxophytodienoate reductase 2 (OPR2) (Oryza sativa subsp. japonica (Rice)).